We begin with the raw amino-acid sequence, 63 residues long: uncharacterized protein (63 aa).

This is an uncharacterized protein from Bdellovibrio bacteriovorus (Bacteriophage phiMH2K).